A 151-amino-acid chain; its full sequence is Ribonuclease H (151 aa).

The RNase H type-1 domain maps to 1 to 146 (MPDLYAYTDG…ADELARAGMA (146 aa)). Residues Asp9, Glu52, Asp74, and Asp138 each contribute to the Mg(2+) site.

Belongs to the RNase H family. Monomer. Mg(2+) serves as cofactor.

Its subcellular location is the cytoplasm. It carries out the reaction Endonucleolytic cleavage to 5'-phosphomonoester.. Its function is as follows. Endonuclease that specifically degrades the RNA of RNA-DNA hybrids. This is Ribonuclease H from Cereibacter sphaeroides (strain ATCC 17029 / ATH 2.4.9) (Rhodobacter sphaeroides).